A 382-amino-acid polypeptide reads, in one-letter code: tRNA (guanine(26)-N(2))-dimethyltransferase (382 aa).

The Trm1 methyltransferase domain maps to 4–370; that stretch reads TEVIEGKARL…REFSEILECV (367 aa). 5 residues coordinate S-adenosyl-L-methionine: Arg-44, Arg-69, Asp-87, Asp-113, and Ala-114. 4 residues coordinate Zn(2+): Cys-244, Cys-247, Cys-261, and Cys-264.

Belongs to the class I-like SAM-binding methyltransferase superfamily. Trm1 family.

The enzyme catalyses guanosine(26) in tRNA + 2 S-adenosyl-L-methionine = N(2)-dimethylguanosine(26) in tRNA + 2 S-adenosyl-L-homocysteine + 2 H(+). Functionally, dimethylates a single guanine residue at position 26 of a number of tRNAs using S-adenosyl-L-methionine as donor of the methyl groups. The chain is tRNA (guanine(26)-N(2))-dimethyltransferase from Metallosphaera sedula (strain ATCC 51363 / DSM 5348 / JCM 9185 / NBRC 15509 / TH2).